The chain runs to 634 residues: Microtubule-associated protein 70-2 (634 aa).

Residues 1–57 are disordered; sequence MSDVSGDGDLSATVTEHEVTPQPPVSSATYPSLTVSASYKESSGGKSSSKRRPIRPS. Residues 25 to 35 are compositionally biased toward polar residues; sequence VSSATYPSLTV. Residues 36–47 show a composition bias toward low complexity; the sequence is SASYKESSGGKS. Residues 74-392 adopt a coiled-coil conformation; that stretch reads DPVKVELNRL…LRLKVLEETL (319 aa). The tract at residues 258-494 is required for targeting to microtubules; sequence ILDRMHRQKV…YSFNKATDDS (237 aa). Polar residues-rich tracts occupy residues 393-417 and 443-464; these read RGTS…SRRQ and MRHS…TSKS. 2 disordered regions span residues 393 to 526 and 594 to 634; these read RGTS…SVPG and VEKD…KSTQ. Positions 532–601 form a coiled coil; that stretch reads LQKEVVSLRK…MRVEKDQDAR (70 aa). The span at 605–616 shows a compositional bias: polar residues; it reads FSNSKSPSNTAQ.

This sequence belongs to the MAP70 family.

It is found in the cytoplasm. It localises to the cytoskeleton. Its function is as follows. Plant-specific protein that interact with microtubules. The protein is Microtubule-associated protein 70-2 (MAP70.2) of Arabidopsis thaliana (Mouse-ear cress).